A 320-amino-acid chain; its full sequence is Homoserine kinase (320 aa).

100–110 (PLSSGMGSSAA) contacts ATP.

The protein belongs to the GHMP kinase family. Homoserine kinase subfamily.

The protein localises to the cytoplasm. It catalyses the reaction L-homoserine + ATP = O-phospho-L-homoserine + ADP + H(+). Its pathway is amino-acid biosynthesis; L-threonine biosynthesis; L-threonine from L-aspartate: step 4/5. Its function is as follows. Catalyzes the ATP-dependent phosphorylation of L-homoserine to L-homoserine phosphate. This Chlorobium phaeovibrioides (strain DSM 265 / 1930) (Prosthecochloris vibrioformis (strain DSM 265)) protein is Homoserine kinase.